The chain runs to 479 residues: Aspartyl/glutamyl-tRNA(Asn/Gln) amidotransferase subunit B (479 aa).

This sequence belongs to the GatB/GatE family. GatB subfamily. In terms of assembly, heterotrimer of A, B and C subunits.

It catalyses the reaction L-glutamyl-tRNA(Gln) + L-glutamine + ATP + H2O = L-glutaminyl-tRNA(Gln) + L-glutamate + ADP + phosphate + H(+). The catalysed reaction is L-aspartyl-tRNA(Asn) + L-glutamine + ATP + H2O = L-asparaginyl-tRNA(Asn) + L-glutamate + ADP + phosphate + 2 H(+). In terms of biological role, allows the formation of correctly charged Asn-tRNA(Asn) or Gln-tRNA(Gln) through the transamidation of misacylated Asp-tRNA(Asn) or Glu-tRNA(Gln) in organisms which lack either or both of asparaginyl-tRNA or glutaminyl-tRNA synthetases. The reaction takes place in the presence of glutamine and ATP through an activated phospho-Asp-tRNA(Asn) or phospho-Glu-tRNA(Gln). The polypeptide is Aspartyl/glutamyl-tRNA(Asn/Gln) amidotransferase subunit B (Streptococcus pyogenes serotype M28 (strain MGAS6180)).